A 518-amino-acid chain; its full sequence is MYHLNVTPDKQTSPHGCLVVSETDQQRSHVKERVNGTPNQNGGTSTSSKPRSVFENRPPQRLTREAMSKYLRERNDQTLIILHAKVAQKSYGNEKRFLCPPPCLYLMESGWKQKQQILEEADQAPEAGQVHAFIGIGSSDQEMQQLNLDGKNFCTAKTLYISDTDKRKHFMLCVKMFFGSGLEVGAFNSRRIKVISKPSKKKQSLKNADLCIASGTKVALFNRLRSQTVSTRYLHVENGNFHASSIQWGSFAIHLLDDDESESEEFTVRDGYIHYGQTVKLVCSTTGMALPRLIIRKVDKQTAILNADDPVSQLHKCAFYLKDSERMYLCLSQERIIQFQATPCPKEPNKEMINDGASWTIISTDKAEYTFCDGMGPTSKPVTPVPVVHSLQLNGGGDVAMLEVNGENFSPQLKVWFGEVEADTMYRCEEGLLCVVPDISEFREGWTWVKQSVQVPINLVRHDGIIYPTNLTFTFTPEPGPRPTLARLLYISSTPRDRIMPDRVPGRGVLIRPTWTTT.

A disordered region spans residues 22–59 (ETDQQRSHVKERVNGTPNQNGGTSTSSKPRSVFENRPP). Residues 24–34 (DQQRSHVKERV) show a composition bias toward basic and acidic residues. The segment covering 36–50 (GTPNQNGGTSTSSKP) has biased composition (polar residues). 3 consecutive DNA-binding regions follow at residues 89 to 96 (KSYGNEKR), 223 to 232 (RLRSQTVSTR), and 296 to 328 (RKVD…ERMY). The 91-residue stretch at 386–476 (PVVHSLQLNG…YPTNLTFTFT (91 aa)) folds into the IPT/TIG domain.

It belongs to the Su(H) family. Interacts with activated Notch proteins.

It is found in the nucleus. Its function is as follows. Transcriptional regulator that plays a central role in Notch signaling, a signaling pathway involved in cell-cell communication that regulates a broad spectrum of cell-fate determinations. Acts as a transcriptional repressor when it is not associated with Notch proteins. When associated with some Notch protein, it acts as a transcriptional activator that activates transcription of Notch target genes. In Halocynthia roretzi (Sea squirt), this protein is Suppressor of hairless homolog (RBP-JK).